The chain runs to 260 residues: Thiazole synthase (260 aa).

Residue K102 is the Schiff-base intermediate with DXP of the active site. Residues G163, 189 to 190, and 211 to 212 contribute to the 1-deoxy-D-xylulose 5-phosphate site; these read AG and NT.

It belongs to the ThiG family. As to quaternary structure, homotetramer. Forms heterodimers with either ThiH or ThiS.

Its subcellular location is the cytoplasm. It carries out the reaction [ThiS sulfur-carrier protein]-C-terminal-Gly-aminoethanethioate + 2-iminoacetate + 1-deoxy-D-xylulose 5-phosphate = [ThiS sulfur-carrier protein]-C-terminal Gly-Gly + 2-[(2R,5Z)-2-carboxy-4-methylthiazol-5(2H)-ylidene]ethyl phosphate + 2 H2O + H(+). It participates in cofactor biosynthesis; thiamine diphosphate biosynthesis. Functionally, catalyzes the rearrangement of 1-deoxy-D-xylulose 5-phosphate (DXP) to produce the thiazole phosphate moiety of thiamine. Sulfur is provided by the thiocarboxylate moiety of the carrier protein ThiS. In vitro, sulfur can be provided by H(2)S. This chain is Thiazole synthase, found in Geobacter sp. (strain M21).